Reading from the N-terminus, the 97-residue chain is Putative ankyrin repeat protein RBE_0357 (97 aa).

The ANK repeat unit spans residues 24 to 54; the sequence is YGKTALHYAYTKRNIDIIKILLKCPGIKICI.

The sequence is that of Putative ankyrin repeat protein RBE_0357 from Rickettsia bellii (strain RML369-C).